The primary structure comprises 1416 residues: DNA-directed RNA polymerase subunit beta' (1416 aa).

Residues cysteine 68, cysteine 70, cysteine 83, and cysteine 86 each coordinate Zn(2+). Positions 458, 460, and 462 each coordinate Mg(2+). Residues cysteine 811, cysteine 884, cysteine 891, and cysteine 894 each contribute to the Zn(2+) site.

The protein belongs to the RNA polymerase beta' chain family. The RNAP catalytic core consists of 2 alpha, 1 beta, 1 beta' and 1 omega subunit. When a sigma factor is associated with the core the holoenzyme is formed, which can initiate transcription. It depends on Mg(2+) as a cofactor. Zn(2+) is required as a cofactor.

It catalyses the reaction RNA(n) + a ribonucleoside 5'-triphosphate = RNA(n+1) + diphosphate. Its function is as follows. DNA-dependent RNA polymerase catalyzes the transcription of DNA into RNA using the four ribonucleoside triphosphates as substrates. This chain is DNA-directed RNA polymerase subunit beta', found in Francisella philomiragia subsp. philomiragia (strain ATCC 25017 / CCUG 19701 / FSC 153 / O#319-036).